The sequence spans 479 residues: MAIGGGGGGGSWSIHGRPDVTSRYEVLGRAGSGAYADVYRGRRRSDGAPVALKEVHDAVSARREADALLAAAPSRHVVALLDHFPGGDHDDDVLVLEWLPLDLSAVVRAAAAARPSALPAAQRKRWMLQVLEGVAACHSAGVVHRDLKPANLLISEDGVLKVADLGQARILQETGTYQGMHPYEQSSGVEPWVSQQRAVLHGVKENHPSHDSETQTGQEPERLTAADYLHEMDQLRAKSTHGDVDKMSLQDGNASCLATCSTADIDDDPFRASYSYDAEEGMLEEESGAFTSCVGTRWFRAPELLYGSTNYGQEVDLWSLGCILAELFNLEPIFPGTSDIDQIGRIISVLGNITEETFPGCSNLPDYNKIFFNKVEKPIGLEACLPDRSASEVSIIKRLLCYDPTKRASAADLLNDPYFAEEPLPVPIEGLQVPESKDEDDDSTEEWANFRGGDSDSDFDEFGSMDVTKTDKGFSIRFS.

Positions 24–419 (YEVLGRAGSG…AADLLNDPYF (396 aa)) constitute a Protein kinase domain. Residues 30–38 (AGSGAYADV) and Lys53 each bind ATP. The active-site Proton acceptor is the Asp146. Thr291 is modified (phosphothreonine). The disordered stretch occupies residues 429 to 479 (EGLQVPESKDEDDDSTEEWANFRGGDSDSDFDEFGSMDVTKTDKGFSIRFS). Basic and acidic residues predominate over residues 468–479 (TKTDKGFSIRFS).

This sequence belongs to the protein kinase superfamily. CMGC Ser/Thr protein kinase family. CDC2/CDKX subfamily.

The enzyme catalyses L-seryl-[protein] + ATP = O-phospho-L-seryl-[protein] + ADP + H(+). The catalysed reaction is L-threonyl-[protein] + ATP = O-phospho-L-threonyl-[protein] + ADP + H(+). It carries out the reaction [DNA-directed RNA polymerase] + ATP = phospho-[DNA-directed RNA polymerase] + ADP + H(+). In Oryza sativa subsp. japonica (Rice), this protein is Cyclin-dependent kinase F-1 (CDKF-1).